Consider the following 67-residue polypeptide: Large ribosomal subunit protein uL29 (67 aa).

It belongs to the universal ribosomal protein uL29 family.

This chain is Large ribosomal subunit protein uL29, found in Sphingopyxis alaskensis (strain DSM 13593 / LMG 18877 / RB2256) (Sphingomonas alaskensis).